The primary structure comprises 201 residues: Probable chemoreceptor glutamine deamidase CheD (201 aa).

This sequence belongs to the CheD family.

The catalysed reaction is L-glutaminyl-[protein] + H2O = L-glutamyl-[protein] + NH4(+). In terms of biological role, probably deamidates glutamine residues to glutamate on methyl-accepting chemotaxis receptors (MCPs), playing an important role in chemotaxis. This Chlorobium luteolum (strain DSM 273 / BCRC 81028 / 2530) (Pelodictyon luteolum) protein is Probable chemoreceptor glutamine deamidase CheD.